The primary structure comprises 284 residues: Diaminopimelate epimerase (284 aa).

N20, Q53, and N73 together coordinate substrate. The active-site Proton donor is the C82. Substrate-binding positions include 83–84 (GN), N167, N200, and 218–219 (ER). C227 serves as the catalytic Proton acceptor. 228-229 (GS) provides a ligand contact to substrate.

Belongs to the diaminopimelate epimerase family. In terms of assembly, homodimer.

Its subcellular location is the cytoplasm. The catalysed reaction is (2S,6S)-2,6-diaminopimelate = meso-2,6-diaminopimelate. It functions in the pathway amino-acid biosynthesis; L-lysine biosynthesis via DAP pathway; DL-2,6-diaminopimelate from LL-2,6-diaminopimelate: step 1/1. Its function is as follows. Catalyzes the stereoinversion of LL-2,6-diaminopimelate (L,L-DAP) to meso-diaminopimelate (meso-DAP), a precursor of L-lysine and an essential component of the bacterial peptidoglycan. This is Diaminopimelate epimerase from Xanthomonas axonopodis pv. citri (strain 306).